The chain runs to 416 residues: Glutamyl-tRNA reductase (416 aa).

Residues 49–52 (TCNR), Ser105, 110–112 (EPQ), and Gln116 contribute to the substrate site. Cys50 serves as the catalytic Nucleophile. Residue 185 to 190 (GAGETI) coordinates NADP(+).

The protein belongs to the glutamyl-tRNA reductase family. Homodimer.

The catalysed reaction is (S)-4-amino-5-oxopentanoate + tRNA(Glu) + NADP(+) = L-glutamyl-tRNA(Glu) + NADPH + H(+). Its pathway is porphyrin-containing compound metabolism; protoporphyrin-IX biosynthesis; 5-aminolevulinate from L-glutamyl-tRNA(Glu): step 1/2. Catalyzes the NADPH-dependent reduction of glutamyl-tRNA(Glu) to glutamate 1-semialdehyde (GSA). This chain is Glutamyl-tRNA reductase, found in Shewanella halifaxensis (strain HAW-EB4).